A 134-amino-acid polypeptide reads, in one-letter code: Small ribosomal subunit protein uS8 (134 aa).

Belongs to the universal ribosomal protein uS8 family. Part of the 30S ribosomal subunit. Contacts proteins S5 and S12.

Functionally, one of the primary rRNA binding proteins, it binds directly to 16S rRNA central domain where it helps coordinate assembly of the platform of the 30S subunit. This is Small ribosomal subunit protein uS8 from Synechococcus sp. (strain JA-3-3Ab) (Cyanobacteria bacterium Yellowstone A-Prime).